A 243-amino-acid polypeptide reads, in one-letter code: Anti-H(O) lectin 1 (243 aa).

N-linked (GlcNAc...) asparagine; partial glycosylation is present at asparagine 10. Asparagine 116 is a glycosylation site (N-linked (GlcNAc...) asparagine). Glutamate 126 and aspartate 128 together coordinate Mn(2+). The Ca(2+) site is built by aspartate 128, asparagine 135, and aspartate 138. Residues aspartate 138 and histidine 143 each coordinate Mn(2+).

The protein belongs to the leguminous lectin family.

L-fucose specific lectin. This is Anti-H(O) lectin 1 from Ulex europaeus (Furze).